Here is a 281-residue protein sequence, read N- to C-terminus: Protease HtpX homolog (281 aa).

2 helical membrane-spanning segments follow: residues 6–26 (VWLLMAALSAILVLIGGAIGG) and 28–48 (SGALLFFLISLGMNLFSYYYS). Position 130 (His-130) interacts with Zn(2+). Glu-131 is a catalytic residue. His-134 lines the Zn(2+) pocket. 2 consecutive transmembrane segments (helical) span residues 140–160 (VLIGTIAAAFAGAITMISNIV) and 181–201 (IASLLLALIAPVAAMIIQLAI). Residue Glu-206 participates in Zn(2+) binding.

The protein belongs to the peptidase M48B family. Requires Zn(2+) as cofactor.

The protein resides in the cell membrane. The polypeptide is Protease HtpX homolog (Pelotomaculum thermopropionicum (strain DSM 13744 / JCM 10971 / SI)).